Consider the following 439-residue polypeptide: GTPase Der (439 aa).

2 EngA-type G domains span residues 4-168 and 177-352; these read PIVA…KDDE and INIA…DNYN. GTP contacts are provided by residues 10 to 17, 57 to 61, 120 to 123, 183 to 190, 230 to 234, and 295 to 298; these read GRPNVGKS, DTGGI, NKID, GKPNVGKS, DTAGL, and NKWD. In terms of domain architecture, KH-like spans 353 to 437; the sequence is KRVKTGVLND…GIKSEFRERK (85 aa).

Belongs to the TRAFAC class TrmE-Era-EngA-EngB-Septin-like GTPase superfamily. EngA (Der) GTPase family. In terms of assembly, associates with the 50S ribosomal subunit.

Functionally, GTPase that plays an essential role in the late steps of ribosome biogenesis. The chain is GTPase Der from Clostridium botulinum (strain ATCC 19397 / Type A).